The following is a 367-amino-acid chain: Protein RecA (367 aa).

An ATP-binding site is contributed by 73–80; it reads GPESSGKT. The interval 345–367 is disordered; sequence DEPVAKKASAKESKEAKELKEVE.

This sequence belongs to the RecA family.

It is found in the cytoplasm. In terms of biological role, can catalyze the hydrolysis of ATP in the presence of single-stranded DNA, the ATP-dependent uptake of single-stranded DNA by duplex DNA, and the ATP-dependent hybridization of homologous single-stranded DNAs. It interacts with LexA causing its activation and leading to its autocatalytic cleavage. The polypeptide is Protein RecA (Herminiimonas arsenicoxydans).